The chain runs to 460 residues: Glycogen synthase (460 aa).

Residue Lys15 coordinates ADP-alpha-D-glucose.

Belongs to the glycosyltransferase 1 family. Bacterial/plant glycogen synthase subfamily.

The enzyme catalyses [(1-&gt;4)-alpha-D-glucosyl](n) + ADP-alpha-D-glucose = [(1-&gt;4)-alpha-D-glucosyl](n+1) + ADP + H(+). It functions in the pathway glycan biosynthesis; glycogen biosynthesis. Functionally, synthesizes alpha-1,4-glucan chains using ADP-glucose. The chain is Glycogen synthase from Trichodesmium erythraeum (strain IMS101).